We begin with the raw amino-acid sequence, 967 residues long: Phosphatidylserine decarboxylase proenzyme 3 (967 aa).

The disordered stretch occupies residues 217–255 (FIAEPDSSIPPSESSVSISTDTGKETPPSKSKKSSNQPY). Low complexity predominate over residues 220–237 (EPDSSIPPSESSVSISTD). Residues 250 to 373 (SSNQPYVSIG…SSAQVDPETG (124 aa)) enclose the C2 domain. Residues Asp343, Ser346, and Asp349 each contribute to the Ca(2+) site. The segment covering 532–544 (DQQATQTPQSPSS) has biased composition (low complexity). The interval 532 to 566 (DQQATQTPQSPSSNEESGPGTPTQTSDQYEDSEDS) is disordered. Residues 545–558 (NEESGPGTPTQTSD) are compositionally biased toward polar residues. Catalysis depends on charge relay system; for autoendoproteolytic cleavage activity residues Asp769, His825, and Ser912. Residue Ser912 is the Schiff-base intermediate with substrate; via pyruvic acid; for decarboxylase activity of the active site. At Ser912 the chain carries Pyruvic acid (Ser); by autocatalysis. A disordered region spans residues 947 to 967 (IGQKIDPNKPTDAEDHSKSDS).

Belongs to the phosphatidylserine decarboxylase family. PSD-B subfamily. Eukaryotic type II sub-subfamily. In terms of assembly, heterodimer of a large membrane-associated beta subunit and a small pyruvoyl-containing alpha subunit. Requires pyruvate as cofactor. The cofactor is Ca(2+). Is synthesized initially as an inactive proenzyme. Formation of the active enzyme involves a self-maturation process in which the active site pyruvoyl group is generated from an internal serine residue via an autocatalytic post-translational modification. Two non-identical subunits are generated from the proenzyme in this reaction, and the pyruvate is formed at the N-terminus of the alpha chain, which is derived from the carboxyl end of the proenzyme. The autoendoproteolytic cleavage occurs by a canonical serine protease mechanism, in which the side chain hydroxyl group of the serine supplies its oxygen atom to form the C-terminus of the beta chain, while the remainder of the serine residue undergoes an oxidative deamination to produce ammonia and the pyruvoyl prosthetic group on the alpha chain. During this reaction, the Ser that is part of the protease active site of the proenzyme becomes the pyruvoyl prosthetic group, which constitutes an essential element of the active site of the mature decarboxylase.

It localises to the golgi apparatus membrane. The protein resides in the endosome membrane. Its subcellular location is the cytoplasm. It catalyses the reaction a 1,2-diacyl-sn-glycero-3-phospho-L-serine + H(+) = a 1,2-diacyl-sn-glycero-3-phosphoethanolamine + CO2. The protein operates within phospholipid metabolism; phosphatidylethanolamine biosynthesis; phosphatidylethanolamine from CDP-diacylglycerol: step 2/2. In terms of biological role, catalyzes the formation of phosphatidylethanolamine (PtdEtn) from phosphatidylserine (PtdSer). Plays a central role in phospholipid metabolism and in the interorganelle trafficking of phosphatidylserine. Together with psd1 and psd2, responsible for the majority of phosphatidylethanolamine synthesis. In Schizosaccharomyces pombe (strain 972 / ATCC 24843) (Fission yeast), this protein is Phosphatidylserine decarboxylase proenzyme 3.